Consider the following 668-residue polypeptide: DNA ligase (668 aa).

NAD(+)-binding positions include 34–38 (DTEYD), 83–84 (SL), and glutamate 114. The active-site N6-AMP-lysine intermediate is the lysine 116. Arginine 137, glutamate 171, lysine 286, and lysine 310 together coordinate NAD(+). The Zn(2+) site is built by cysteine 404, cysteine 407, cysteine 422, and cysteine 427. A BRCT domain is found at 588–668 (NSDSIIANKT…FFDLLKSEKG (81 aa)).

The protein belongs to the NAD-dependent DNA ligase family. LigA subfamily. Requires Mg(2+) as cofactor. Mn(2+) serves as cofactor.

It carries out the reaction NAD(+) + (deoxyribonucleotide)n-3'-hydroxyl + 5'-phospho-(deoxyribonucleotide)m = (deoxyribonucleotide)n+m + AMP + beta-nicotinamide D-nucleotide.. Its function is as follows. DNA ligase that catalyzes the formation of phosphodiester linkages between 5'-phosphoryl and 3'-hydroxyl groups in double-stranded DNA using NAD as a coenzyme and as the energy source for the reaction. It is essential for DNA replication and repair of damaged DNA. The chain is DNA ligase from Mycoplasma capricolum subsp. capricolum (strain California kid / ATCC 27343 / NCTC 10154).